A 593-amino-acid polypeptide reads, in one-letter code: Methionine--tRNA ligase (593 aa).

Positions 7–17 (PYANGPRHIGH) match the 'HIGH' region motif. Residues Cys139, Cys142, Cys152, and Cys155 each contribute to the Zn(2+) site. Residues 343 to 347 (KFSTS) carry the 'KMSKS' region motif. Residue Thr346 participates in ATP binding.

It belongs to the class-I aminoacyl-tRNA synthetase family. MetG type 1 subfamily. As to quaternary structure, monomer. It depends on Zn(2+) as a cofactor.

Its subcellular location is the cytoplasm. The catalysed reaction is tRNA(Met) + L-methionine + ATP = L-methionyl-tRNA(Met) + AMP + diphosphate. Functionally, is required not only for elongation of protein synthesis but also for the initiation of all mRNA translation through initiator tRNA(fMet) aminoacylation. The chain is Methionine--tRNA ligase from Saccharopolyspora erythraea (strain ATCC 11635 / DSM 40517 / JCM 4748 / NBRC 13426 / NCIMB 8594 / NRRL 2338).